Here is a 375-residue protein sequence, read N- to C-terminus: Quinolinate synthase (375 aa).

Iminosuccinate contacts are provided by histidine 47 and serine 64. Cysteine 110 contacts [4Fe-4S] cluster. Residues tyrosine 144 to asparagine 146 and serine 165 contribute to the iminosuccinate site. Cysteine 235 contributes to the [4Fe-4S] cluster binding site. Iminosuccinate is bound by residues histidine 261–glutamate 263 and threonine 278. Cysteine 325 contributes to the [4Fe-4S] cluster binding site.

The protein belongs to the quinolinate synthase family. Type 3 subfamily. It depends on [4Fe-4S] cluster as a cofactor.

It localises to the cytoplasm. It carries out the reaction iminosuccinate + dihydroxyacetone phosphate = quinolinate + phosphate + 2 H2O + H(+). It functions in the pathway cofactor biosynthesis; NAD(+) biosynthesis; quinolinate from iminoaspartate: step 1/1. Functionally, catalyzes the condensation of iminoaspartate with dihydroxyacetone phosphate to form quinolinate. The polypeptide is Quinolinate synthase (Herpetosiphon aurantiacus (strain ATCC 23779 / DSM 785 / 114-95)).